Here is a 493-residue protein sequence, read N- to C-terminus: Glutamate--tRNA ligase (493 aa).

Positions 10–20 match the 'HIGH' region motif; that stretch reads PSPTGDPHVGT. The short motif at 251 to 255 is the 'KMSKS' region element; sequence KLSKR. Position 254 (Lys254) interacts with ATP.

Belongs to the class-I aminoacyl-tRNA synthetase family. Glutamate--tRNA ligase type 1 subfamily. Monomer.

It is found in the cytoplasm. The catalysed reaction is tRNA(Glu) + L-glutamate + ATP = L-glutamyl-tRNA(Glu) + AMP + diphosphate. Its function is as follows. Catalyzes the attachment of glutamate to tRNA(Glu) in a two-step reaction: glutamate is first activated by ATP to form Glu-AMP and then transferred to the acceptor end of tRNA(Glu). The protein is Glutamate--tRNA ligase of Pseudomonas savastanoi pv. phaseolicola (strain 1448A / Race 6) (Pseudomonas syringae pv. phaseolicola (strain 1448A / Race 6)).